Reading from the N-terminus, the 675-residue chain is DNA ligase (675 aa).

NAD(+) is bound by residues 41-45 (DAEYD), 90-91 (SL), and Glu-120. Lys-122 serves as the catalytic N6-AMP-lysine intermediate. 4 residues coordinate NAD(+): Arg-143, Glu-178, Lys-295, and Lys-319. Cys-413, Cys-416, Cys-431, and Cys-436 together coordinate Zn(2+). The region spanning 596 to 675 (GVPQTFAGKT…ADFLQLIDRV (80 aa)) is the BRCT domain.

The protein belongs to the NAD-dependent DNA ligase family. LigA subfamily. Mg(2+) serves as cofactor. The cofactor is Mn(2+).

The catalysed reaction is NAD(+) + (deoxyribonucleotide)n-3'-hydroxyl + 5'-phospho-(deoxyribonucleotide)m = (deoxyribonucleotide)n+m + AMP + beta-nicotinamide D-nucleotide.. Functionally, DNA ligase that catalyzes the formation of phosphodiester linkages between 5'-phosphoryl and 3'-hydroxyl groups in double-stranded DNA using NAD as a coenzyme and as the energy source for the reaction. It is essential for DNA replication and repair of damaged DNA. The chain is DNA ligase from Heliobacterium modesticaldum (strain ATCC 51547 / Ice1).